The sequence spans 242 residues: Uridylate kinase (242 aa).

13 to 16 (KLSG) contacts ATP. Gly-55 is a binding site for UMP. Positions 56 and 60 each coordinate ATP. UMP is bound by residues Asp-75 and 136–143 (TGNPFFTT). Positions 163, 169, and 172 each coordinate ATP.

Belongs to the UMP kinase family. In terms of assembly, homohexamer.

It localises to the cytoplasm. The catalysed reaction is UMP + ATP = UDP + ADP. Its pathway is pyrimidine metabolism; CTP biosynthesis via de novo pathway; UDP from UMP (UMPK route): step 1/1. Inhibited by UTP. Its function is as follows. Catalyzes the reversible phosphorylation of UMP to UDP. This Zymomonas mobilis subsp. mobilis (strain ATCC 31821 / ZM4 / CP4) protein is Uridylate kinase.